Here is a 437-residue protein sequence, read N- to C-terminus: Enolase 1 (437 aa).

K60 participates in a covalent cross-link: Glycyl lysine isopeptide (Lys-Gly) (interchain with G-Cter in ubiquitin). Phosphoserine is present on residues S119 and S138. Positions 160 and 169 each coordinate substrate. S188 carries the phosphoserine modification. Residue E212 is the Proton donor of the active site. Residue K243 forms a Glycyl lysine isopeptide (Lys-Gly) (interchain with G-Cter in ubiquitin) linkage. Mg(2+) contacts are provided by D247 and E296. E296 contributes to the substrate binding site. The residue at position 313 (T313) is a Phosphothreonine. D321 lines the substrate pocket. D321 contacts Mg(2+). Residue T324 is modified to Phosphothreonine. Residue K346 is the Proton acceptor of the active site. K358 participates in a covalent cross-link: Glycyl lysine isopeptide (Lys-Gly) (interchain with G-Cter in ubiquitin). Residues 373–376 and K397 each bind substrate; that span reads SHRS.

This sequence belongs to the enolase family. As to quaternary structure, homodimer. The cofactor is Mg(2+).

It is found in the cytoplasm. It catalyses the reaction (2R)-2-phosphoglycerate = phosphoenolpyruvate + H2O. The protein operates within carbohydrate degradation; glycolysis; pyruvate from D-glyceraldehyde 3-phosphate: step 4/5. This Saccharomyces cerevisiae (strain ATCC 204508 / S288c) (Baker's yeast) protein is Enolase 1 (ENO1).